Consider the following 235-residue polypeptide: UPF0758 protein Swol_1642 (235 aa).

The MPN domain maps to 109–235 (IIKSPEDVQE…YCSLKARGLI (127 aa)). Residues His-184, His-186, and Asp-197 each contribute to the Zn(2+) site. The short motif at 184 to 197 (HNHPSGDPTPSQED) is the JAMM motif element.

It belongs to the UPF0758 family.

This is UPF0758 protein Swol_1642 from Syntrophomonas wolfei subsp. wolfei (strain DSM 2245B / Goettingen).